Here is a 500-residue protein sequence, read N- to C-terminus: Ribose import ATP-binding protein RbsA (500 aa).

2 ABC transporter domains span residues 6–242 and 252–495; these read LALS…VGRK and AQQG…VGRN. Position 38-45 (38-45) interacts with ATP; the sequence is GENGAGKS.

The protein belongs to the ABC transporter superfamily. Ribose importer (TC 3.A.1.2.1) family. The complex is composed of an ATP-binding protein (RbsA), two transmembrane proteins (RbsC) and a solute-binding protein (RbsB).

It is found in the cell inner membrane. The catalysed reaction is D-ribose(out) + ATP + H2O = D-ribose(in) + ADP + phosphate + H(+). Functionally, part of the ABC transporter complex RbsABC involved in ribose import. Responsible for energy coupling to the transport system. This is Ribose import ATP-binding protein RbsA from Vibrio cholerae serotype O1 (strain ATCC 39315 / El Tor Inaba N16961).